Consider the following 378-residue polypeptide: S-adenosylmethionine synthase (378 aa).

Position 15 (histidine 15) interacts with ATP. Aspartate 17 contributes to the Mg(2+) binding site. Glutamate 43 serves as a coordination point for K(+). L-methionine contacts are provided by glutamate 56 and glutamine 99. Residues 99–109 (QSPDINQGINR) are flexible loop. ATP contacts are provided by residues 164 to 166 (DAK), 230 to 231 (RF), aspartate 239, 245 to 246 (RK), alanine 262, and lysine 266. Aspartate 239 provides a ligand contact to L-methionine. Position 270 (lysine 270) interacts with L-methionine.

Belongs to the AdoMet synthase family. In terms of assembly, homotetramer; dimer of dimers. Mg(2+) serves as cofactor. Requires K(+) as cofactor.

The protein resides in the cytoplasm. The catalysed reaction is L-methionine + ATP + H2O = S-adenosyl-L-methionine + phosphate + diphosphate. Its pathway is amino-acid biosynthesis; S-adenosyl-L-methionine biosynthesis; S-adenosyl-L-methionine from L-methionine: step 1/1. Catalyzes the formation of S-adenosylmethionine (AdoMet) from methionine and ATP. The overall synthetic reaction is composed of two sequential steps, AdoMet formation and the subsequent tripolyphosphate hydrolysis which occurs prior to release of AdoMet from the enzyme. This chain is S-adenosylmethionine synthase, found in Buchnera aphidicola subsp. Acyrthosiphon pisum (strain 5A).